The sequence spans 538 residues: Putative outer membrane porin BglH (538 aa).

Positions 1-25 (MFRRNLITSAILLMAPLAFSAQSLA) are cleaved as a signal peptide. The interval 52-82 (KDEEKKKYTPATVNRSVSTNDQGYAANPFPT) is disordered. Polar residues predominate over residues 62-73 (ATVNRSVSTNDQ).

Belongs to the porin LamB (TC 1.B.3) family.

The protein localises to the cell outer membrane. May be a sugar porin with a broad carbohydrate specificity. The polypeptide is Putative outer membrane porin BglH (bglH) (Shigella flexneri serotype 5b (strain 8401)).